The following is a 60-amino-acid chain: Small ribosomal subunit protein bS21 (60 aa).

The interval 38 to 60 is disordered; it reads KGVKRREKEKAARKRLQKKHRMY.

It belongs to the bacterial ribosomal protein bS21 family.

The sequence is that of Small ribosomal subunit protein bS21 from Mycoplasmoides gallisepticum (strain R(low / passage 15 / clone 2)) (Mycoplasma gallisepticum).